A 175-amino-acid polypeptide reads, in one-letter code: NADH dehydrogenase [ubiquinone] 1 alpha subcomplex assembly factor 4 (175 aa).

The N-myristoyl glycine moiety is linked to residue G2. Position 35 is a phosphoserine (S35).

This sequence belongs to the NDUFAF4 family. In terms of assembly, binds calmodulin. Interacts with NDUFAF3. As to quaternary structure, (Microbial infection) Interacts with the vesicular stomatitis virus matrix protein/M; the interaction inhibits viral propagation. In terms of processing, phosphorylated on serine. Prolactin stimulate serine phosphorylation.

The protein resides in the mitochondrion. The protein localises to the membrane. Its function is as follows. Involved in the assembly of mitochondrial NADH:ubiquinone oxidoreductase complex (complex I). May be involved in cell proliferation and survival of hormone-dependent tumor cells. May be a regulator of breast tumor cell invasion. The polypeptide is NADH dehydrogenase [ubiquinone] 1 alpha subcomplex assembly factor 4 (Homo sapiens (Human)).